Consider the following 62-residue polypeptide: Large ribosomal subunit protein bL28 (62 aa).

The protein belongs to the bacterial ribosomal protein bL28 family.

This chain is Large ribosomal subunit protein bL28, found in Onion yellows phytoplasma (strain OY-M).